A 274-amino-acid polypeptide reads, in one-letter code: Large ribosomal subunit protein uL2 (274 aa).

A disordered region spans residues 224-274 (VAMNPVDHPHGGGEGRTSGGRHPVTPWGIPTKGYKTRRNKRSNKLIVQKRK). Residues 257–274 (YKTRRNKRSNKLIVQKRK) are compositionally biased toward basic residues.

Belongs to the universal ribosomal protein uL2 family. Part of the 50S ribosomal subunit. Forms a bridge to the 30S subunit in the 70S ribosome.

Its function is as follows. One of the primary rRNA binding proteins. Required for association of the 30S and 50S subunits to form the 70S ribosome, for tRNA binding and peptide bond formation. It has been suggested to have peptidyltransferase activity; this is somewhat controversial. Makes several contacts with the 16S rRNA in the 70S ribosome. The protein is Large ribosomal subunit protein uL2 of Francisella tularensis subsp. tularensis (strain FSC 198).